The primary structure comprises 280 residues: ATP synthase gamma chain (280 aa).

Belongs to the ATPase gamma chain family. As to quaternary structure, F-type ATPases have 2 components, CF(1) - the catalytic core - and CF(0) - the membrane proton channel. CF(1) has five subunits: alpha(3), beta(3), gamma(1), delta(1), epsilon(1). CF(0) has three main subunits: a, b and c.

It is found in the cell membrane. Functionally, produces ATP from ADP in the presence of a proton gradient across the membrane. The gamma chain is believed to be important in regulating ATPase activity and the flow of protons through the CF(0) complex. The sequence is that of ATP synthase gamma chain from Mycoplasma mycoides subsp. mycoides SC (strain CCUG 32753 / NCTC 10114 / PG1).